A 427-amino-acid polypeptide reads, in one-letter code: Trigger factor (427 aa).

In terms of domain architecture, PPIase FKBP-type spans 163–248; the sequence is GDVVNLDFDG…INEVKSKEVP (86 aa).

Belongs to the FKBP-type PPIase family. Tig subfamily.

It localises to the cytoplasm. The enzyme catalyses [protein]-peptidylproline (omega=180) = [protein]-peptidylproline (omega=0). Involved in protein export. Acts as a chaperone by maintaining the newly synthesized protein in an open conformation. Functions as a peptidyl-prolyl cis-trans isomerase. In Macrococcus caseolyticus (strain JCSC5402) (Macrococcoides caseolyticum), this protein is Trigger factor.